A 433-amino-acid polypeptide reads, in one-letter code: Enolase (433 aa).

Residues 37 to 59 (RAAVPSGASTGEHEAVELRDGDK) are disordered. Over residues 47-59 (GEHEAVELRDGDK) the composition is skewed to basic and acidic residues. Gln166 provides a ligand contact to (2R)-2-phosphoglycerate. Glu208 acts as the Proton donor in catalysis. Residues Asp245, Glu291, and Asp318 each coordinate Mg(2+). (2R)-2-phosphoglycerate contacts are provided by Lys343, Arg372, Ser373, and Lys394. Lys343 acts as the Proton acceptor in catalysis.

The protein belongs to the enolase family. Mg(2+) serves as cofactor.

It localises to the cytoplasm. The protein resides in the secreted. The protein localises to the cell surface. It catalyses the reaction (2R)-2-phosphoglycerate = phosphoenolpyruvate + H2O. It functions in the pathway carbohydrate degradation; glycolysis; pyruvate from D-glyceraldehyde 3-phosphate: step 4/5. Catalyzes the reversible conversion of 2-phosphoglycerate (2-PG) into phosphoenolpyruvate (PEP). It is essential for the degradation of carbohydrates via glycolysis. This is Enolase from Leptospira biflexa serovar Patoc (strain Patoc 1 / Ames).